We begin with the raw amino-acid sequence, 172 residues long: Cytochrome b6-f complex iron-sulfur subunit (172 aa).

A helical membrane pass occupies residues 19 to 39; sequence LNALLSGSVGVVVVGALYPVV. A Rieske domain is found at 61 to 161; sequence GKPISVSELL…ATVDGDNVRF (101 aa). Cys107, His109, Cys125, and His128 together coordinate [2Fe-2S] cluster. Cys112 and Cys127 form a disulfide bridge.

It belongs to the Rieske iron-sulfur protein family. The 4 large subunits of the cytochrome b6-f complex are cytochrome b6, subunit IV (17 kDa polypeptide, PetD), cytochrome f and the Rieske protein, while the 4 small subunits are PetG, PetL, PetM and PetN. The complex functions as a dimer. The cofactor is [2Fe-2S] cluster.

The protein localises to the cellular thylakoid membrane. The enzyme catalyses 2 oxidized [plastocyanin] + a plastoquinol + 2 H(+)(in) = 2 reduced [plastocyanin] + a plastoquinone + 4 H(+)(out). Its function is as follows. Component of the cytochrome b6-f complex, which mediates electron transfer between photosystem II (PSII) and photosystem I (PSI), cyclic electron flow around PSI, and state transitions. The polypeptide is Cytochrome b6-f complex iron-sulfur subunit (Synechococcus sp. (strain JA-2-3B'a(2-13)) (Cyanobacteria bacterium Yellowstone B-Prime)).